A 115-amino-acid polypeptide reads, in one-letter code: NADH-ubiquinone oxidoreductase chain 3 (115 aa).

The next 3 membrane-spanning stretches (helical) occupy residues 3–23, 55–75, and 84–104; these read VMLALLTNTLLSTLLVLIAFW, FFLVAITFLLFDLEIALLLPL, and LPTMLTMALLLISLLAASLAY.

This sequence belongs to the complex I subunit 3 family. Core subunit of respiratory chain NADH dehydrogenase (Complex I) which is composed of 45 different subunits. Interacts with TMEM186. Interacts with TMEM242.

Its subcellular location is the mitochondrion inner membrane. The enzyme catalyses a ubiquinone + NADH + 5 H(+)(in) = a ubiquinol + NAD(+) + 4 H(+)(out). Its function is as follows. Core subunit of the mitochondrial membrane respiratory chain NADH dehydrogenase (Complex I) which catalyzes electron transfer from NADH through the respiratory chain, using ubiquinone as an electron acceptor. Essential for the catalytic activity of complex I. This Felis catus (Cat) protein is NADH-ubiquinone oxidoreductase chain 3.